The sequence spans 136 residues: Large ribosomal subunit protein uL16 (136 aa).

This sequence belongs to the universal ribosomal protein uL16 family. Part of the 50S ribosomal subunit.

Its function is as follows. Binds 23S rRNA and is also seen to make contacts with the A and possibly P site tRNAs. The protein is Large ribosomal subunit protein uL16 of Shewanella denitrificans (strain OS217 / ATCC BAA-1090 / DSM 15013).